A 418-amino-acid polypeptide reads, in one-letter code: Putative competence-damage inducible protein (418 aa).

Belongs to the CinA family.

This is Putative competence-damage inducible protein from Streptococcus pneumoniae (strain CGSP14).